The chain runs to 383 residues: S-adenosylmethionine synthase (383 aa).

His15 contributes to the ATP binding site. Position 17 (Asp17) interacts with Mg(2+). Glu43 is a binding site for K(+). 2 residues coordinate L-methionine: Glu56 and Gln99. A flexible loop region spans residues 99 to 109; the sequence is QSPDINQGVDR. ATP-binding positions include 164–166, 230–231, Asp239, 245–246, Ala262, and Lys266; these read DAK, RF, and RK. Position 239 (Asp239) interacts with L-methionine. Lys270 is a binding site for L-methionine.

It belongs to the AdoMet synthase family. In terms of assembly, homotetramer; dimer of dimers. The cofactor is Mg(2+). It depends on K(+) as a cofactor.

Its subcellular location is the cytoplasm. It carries out the reaction L-methionine + ATP + H2O = S-adenosyl-L-methionine + phosphate + diphosphate. It functions in the pathway amino-acid biosynthesis; S-adenosyl-L-methionine biosynthesis; S-adenosyl-L-methionine from L-methionine: step 1/1. Its function is as follows. Catalyzes the formation of S-adenosylmethionine (AdoMet) from methionine and ATP. The overall synthetic reaction is composed of two sequential steps, AdoMet formation and the subsequent tripolyphosphate hydrolysis which occurs prior to release of AdoMet from the enzyme. The polypeptide is S-adenosylmethionine synthase (Shewanella amazonensis (strain ATCC BAA-1098 / SB2B)).